A 630-amino-acid polypeptide reads, in one-letter code: uncharacterized protein (630 aa).

A run of 2 helical transmembrane segments spans residues leucine 8–valine 28 and valine 258–isoleucine 278. Residues glutamate 399–serine 426 are disordered. Over residues proline 404–proline 417 the composition is skewed to polar residues.

Belongs to the peptidase S1C family.

It is found in the cell membrane. This is an uncharacterized protein from Sinorhizobium fredii (strain NBRC 101917 / NGR234).